The sequence spans 185 residues: Ribosome-recycling factor (185 aa).

The protein belongs to the RRF family.

The protein resides in the cytoplasm. Its function is as follows. Responsible for the release of ribosomes from messenger RNA at the termination of protein biosynthesis. May increase the efficiency of translation by recycling ribosomes from one round of translation to another. The chain is Ribosome-recycling factor from Edwardsiella ictaluri (strain 93-146).